The chain runs to 227 residues: Ubiquitin domain-containing protein 1 (227 aa).

The tract at residues 1–42 (MGNCVGRQRRERPAAPGHPRKRAGRNEPLKKERLKWKSDYPM) is disordered. Residues 24 to 38 (GRNEPLKKERLKWKS) are compositionally biased toward basic and acidic residues. A Ubiquitin-like domain is found at 149–224 (FPLKVRLSTG…IQVIINQPPP (76 aa)).

In terms of assembly, interacts with UBTD1.

Its function is as follows. May be involved in the regulation of cellular senescence through a positive feedback loop with TP53. Is a TP53 downstream target gene that increases the stability of TP53 protein by promoting the ubiquitination and degradation of MDM2. The sequence is that of Ubiquitin domain-containing protein 1 (Ubtd1) from Mus musculus (Mouse).